Reading from the N-terminus, the 66-residue chain is Large ribosomal subunit protein bL35 (66 aa).

Positions 1–26 (MPKMKTHRGSAKRFKKTGSGKLKRSH) are enriched in basic residues. Positions 1–48 (MPKMKTHRGSAKRFKKTGSGKLKRSHAYTSHLFANKSQKQKRKLRKSA) are disordered.

The protein belongs to the bacterial ribosomal protein bL35 family.

The polypeptide is Large ribosomal subunit protein bL35 (Bacillus licheniformis (strain ATCC 14580 / DSM 13 / JCM 2505 / CCUG 7422 / NBRC 12200 / NCIMB 9375 / NCTC 10341 / NRRL NRS-1264 / Gibson 46)).